Here is a 518-residue protein sequence, read N- to C-terminus: GMP synthase [glutamine-hydrolyzing] (518 aa).

Positions 11–203 constitute a Glutamine amidotransferase type-1 domain; the sequence is SILVLDFGSQ…AFDVCQAEAN (193 aa). Catalysis depends on C88, which acts as the Nucleophile. Active-site residues include H177 and E179. Residues 204–393 enclose the GMPS ATP-PPase domain; sequence WSMDDFIDMQ…LGMPSDLVWR (190 aa). 231-237 provides a ligand contact to ATP; sequence SGGVDSS.

As to quaternary structure, homodimer.

The catalysed reaction is XMP + L-glutamine + ATP + H2O = GMP + L-glutamate + AMP + diphosphate + 2 H(+). It functions in the pathway purine metabolism; GMP biosynthesis; GMP from XMP (L-Gln route): step 1/1. Its function is as follows. Catalyzes the synthesis of GMP from XMP. This is GMP synthase [glutamine-hydrolyzing] from Lactiplantibacillus plantarum (strain ATCC BAA-793 / NCIMB 8826 / WCFS1) (Lactobacillus plantarum).